The sequence spans 86 residues: ATP synthase subunit c (86 aa).

2 consecutive transmembrane segments (helical) span residues 8–28 (VLGC…GPGI) and 64–84 (TTGL…PLLG).

The protein belongs to the ATPase C chain family. In terms of assembly, F-type ATPases have 2 components, F(1) - the catalytic core - and F(0) - the membrane proton channel. F(1) has five subunits: alpha(3), beta(3), gamma(1), delta(1), epsilon(1). F(0) has three main subunits: a(1), b(2) and c(10-14). The alpha and beta chains form an alternating ring which encloses part of the gamma chain. F(1) is attached to F(0) by a central stalk formed by the gamma and epsilon chains, while a peripheral stalk is formed by the delta and b chains.

It localises to the cell membrane. Functionally, f(1)F(0) ATP synthase produces ATP from ADP in the presence of a proton or sodium gradient. F-type ATPases consist of two structural domains, F(1) containing the extramembraneous catalytic core and F(0) containing the membrane proton channel, linked together by a central stalk and a peripheral stalk. During catalysis, ATP synthesis in the catalytic domain of F(1) is coupled via a rotary mechanism of the central stalk subunits to proton translocation. In terms of biological role, key component of the F(0) channel; it plays a direct role in translocation across the membrane. A homomeric c-ring of between 10-14 subunits forms the central stalk rotor element with the F(1) delta and epsilon subunits. The protein is ATP synthase subunit c of Lachnoclostridium phytofermentans (strain ATCC 700394 / DSM 18823 / ISDg) (Clostridium phytofermentans).